Consider the following 93-residue polypeptide: Cell division protein CrgA (93 aa).

2 helical membrane-spanning segments follow: residues 31 to 51 (VWFV…LMVF) and 70 to 90 (LGPW…LLTM).

The protein belongs to the CrgA family.

It is found in the cell membrane. Its function is as follows. Involved in cell division. The protein is Cell division protein CrgA of Mycobacterium avium (strain 104).